A 124-amino-acid chain; its full sequence is MATINQLVRKPRVRQKQKSNVPALQACPQKRGVCTRVYTTTPKKPNSAMRKVARIRLTNGMEVTSYIGGEGHNLQEHSVVLIRGGRVKDLPGVRYHIVRGSLDTAGVGDRRQGRSKYGAKRPKG.

The interval 1–23 (MATINQLVRKPRVRQKQKSNVPA) is disordered. D89 bears the 3-methylthioaspartic acid mark. The tract at residues 103–124 (DTAGVGDRRQGRSKYGAKRPKG) is disordered. Over residues 113–124 (GRSKYGAKRPKG) the composition is skewed to basic residues.

It belongs to the universal ribosomal protein uS12 family. In terms of assembly, part of the 30S ribosomal subunit. Contacts proteins S8 and S17. May interact with IF1 in the 30S initiation complex.

Functionally, with S4 and S5 plays an important role in translational accuracy. Interacts with and stabilizes bases of the 16S rRNA that are involved in tRNA selection in the A site and with the mRNA backbone. Located at the interface of the 30S and 50S subunits, it traverses the body of the 30S subunit contacting proteins on the other side and probably holding the rRNA structure together. The combined cluster of proteins S8, S12 and S17 appears to hold together the shoulder and platform of the 30S subunit. This Nitrosococcus oceani (strain ATCC 19707 / BCRC 17464 / JCM 30415 / NCIMB 11848 / C-107) protein is Small ribosomal subunit protein uS12.